Here is a 428-residue protein sequence, read N- to C-terminus: Enolase (428 aa).

Glutamine 173 serves as a coordination point for (2R)-2-phosphoglycerate. Glutamate 217 acts as the Proton donor in catalysis. 3 residues coordinate Mg(2+): aspartate 253, glutamate 294, and aspartate 320. (2R)-2-phosphoglycerate-binding residues include lysine 345, arginine 374, serine 375, and lysine 396. Lysine 345 serves as the catalytic Proton acceptor.

This sequence belongs to the enolase family. It depends on Mg(2+) as a cofactor.

The protein resides in the cytoplasm. The protein localises to the secreted. It localises to the cell surface. The catalysed reaction is (2R)-2-phosphoglycerate = phosphoenolpyruvate + H2O. The protein operates within carbohydrate degradation; glycolysis; pyruvate from D-glyceraldehyde 3-phosphate: step 4/5. Catalyzes the reversible conversion of 2-phosphoglycerate (2-PG) into phosphoenolpyruvate (PEP). It is essential for the degradation of carbohydrates via glycolysis. In Methanosarcina barkeri (strain Fusaro / DSM 804), this protein is Enolase.